Here is a 512-residue protein sequence, read N- to C-terminus: ADP,ATP carrier protein 4 (512 aa).

The next 12 helical transmembrane spans lie at 34–54 (ISKFLFITLLMFCILFIQNLI), 71–91 (ISFLKFWGVMPSAFLITVMYV), 102–122 (IFYLIISIFLIFFALFAYVIF), 157–177 (FSLFYIIAELWPNVVFALLFW), 192–212 (FYPLFGLLSQTGIYLAGHFLE), 231–251 (FHTLSIQIILTIVLILGIVSI), 296–316 (LIATLLICYGIAINLVEGPWK), 330–350 (AAFIGSYLSYTGVFTIFFVLL), 361–381 (FTSAVITPSIVFITGILFFAF), 390–410 (LIIANFILTDPALVAITIGAI), 448–468 (VIGTKLGKSGSAFLQSLIFII), and 476–496 (SISICLMIIFILTCLTWIWAT).

It belongs to the ADP/ATP translocase tlc family.

The protein localises to the cell membrane. Its function is as follows. Provides the rickettsial cell with host ATP in exchange for rickettsial ADP. This is an obligate exchange system. This energy acquiring activity is an important component of rickettsial parasitism. The protein is ADP,ATP carrier protein 4 (tlcD) of Rickettsia typhi (strain ATCC VR-144 / Wilmington).